A 1067-amino-acid polypeptide reads, in one-letter code: SURP and G-patch domain-containing protein 2 (1067 aa).

S93 carries the post-translational modification Phosphoserine. The span at 177–189 (KESRDYDLDHPGE) shows a compositional bias: basic and acidic residues. Residues 177–199 (KESRDYDLDHPGEVDSVSRSSGQ) are disordered. A Phosphoserine modification is found at S206. Residue K219 forms a Glycyl lysine isopeptide (Lys-Gly) (interchain with G-Cter in SUMO2) linkage. T265 bears the Phosphothreonine mark. A phosphoserine mark is found at S267 and S586. The stretch at 573–616 (IDQLVMRVIQGRLSPRERTLLLQDPAYWFLSDESSLEYKYYKLK) is one SURP motif 1 repeat. Residues 668 to 767 (SQGPRGLKAK…CPSANMDAKT (100 aa)) are disordered. The segment covering 680–691 (TTAQQTSLSSGT) has biased composition (polar residues). At S740 the chain carries Phosphoserine. T744 is modified (phosphothreonine). Residues 770–813 (TAEKLARFVAQVGPEIEQFSIENSTDNPDLWFLHDQSSSAFKFY) form an SURP motif 2 repeat. The span at 825-840 (SFQSTGEAGDSVQSPT) shows a compositional bias: polar residues. 2 disordered regions span residues 825–944 (SFQS…KSLK) and 967–991 (RIAYDRPRGRPIAKKKKPKDMEFSQ). S838 is modified (phosphoserine). The segment covering 843–856 (KEGKGEPQEGHPEQ) has biased composition (basic and acidic residues). Positions 866–883 (LPEEEEEDEEESEDEGGE) are enriched in acidic residues. Positions 919–931 (ASTPGLSQASSGS) are enriched in polar residues. Residues 975–984 (GRPIAKKKKP) are compositionally biased toward basic residues. Residues 980–985 (KKKKPK) carry the Nuclear localization signal motif. Residues 996 to 1042 (DKNVGFQMLQKMGWKEGHGLGSLGKGIREPVSVGALSEGEGLGADGP) enclose the G-patch domain.

The protein localises to the nucleus. Functionally, may play a role in mRNA splicing. This Mus musculus (Mouse) protein is SURP and G-patch domain-containing protein 2 (Sugp2).